The sequence spans 62 residues: Cecropin-A (62 aa).

Residues 1–20 (MNLVKILFCVFACLVFTVTA) form the signal peptide. Positions 21–24 (VPEP) are cleaved as a propeptide — removed by a dipeptidylpeptidase. The residue at position 60 (T60) is a Threonine amide.

The protein belongs to the cecropin family.

It is found in the secreted. Functionally, has antibacterial activity. In Trichoplusia ni (Cabbage looper), this protein is Cecropin-A.